Reading from the N-terminus, the 152-residue chain is Endoribonuclease YbeY (152 aa).

Residues histidine 111, histidine 115, and histidine 121 each coordinate Zn(2+).

The protein belongs to the endoribonuclease YbeY family. The cofactor is Zn(2+).

The protein localises to the cytoplasm. Single strand-specific metallo-endoribonuclease involved in late-stage 70S ribosome quality control and in maturation of the 3' terminus of the 16S rRNA. This chain is Endoribonuclease YbeY, found in Pseudomonas fluorescens (strain ATCC BAA-477 / NRRL B-23932 / Pf-5).